Reading from the N-terminus, the 187-residue chain is Peptide deformylase (187 aa).

Residues Cys-94 and His-136 each contribute to the Fe cation site. The active site involves Glu-137. His-140 contacts Fe cation.

The protein belongs to the polypeptide deformylase family. Fe(2+) serves as cofactor.

It catalyses the reaction N-terminal N-formyl-L-methionyl-[peptide] + H2O = N-terminal L-methionyl-[peptide] + formate. Its function is as follows. Removes the formyl group from the N-terminal Met of newly synthesized proteins. Requires at least a dipeptide for an efficient rate of reaction. N-terminal L-methionine is a prerequisite for activity but the enzyme has broad specificity at other positions. The chain is Peptide deformylase from Chlorobaculum tepidum (strain ATCC 49652 / DSM 12025 / NBRC 103806 / TLS) (Chlorobium tepidum).